A 138-amino-acid chain; its full sequence is Acidic phospholipase A2 1 (138 aa).

The N-terminal stretch at 1 to 16 is a signal peptide; sequence MRTLWIVAVWLMGVEG. Intrachain disulfides connect cysteine 42-cysteine 131, cysteine 44-cysteine 60, cysteine 59-cysteine 111, cysteine 65-cysteine 138, cysteine 66-cysteine 104, cysteine 73-cysteine 97, and cysteine 91-cysteine 102. Residues tyrosine 43, glycine 45, and glycine 47 each coordinate Ca(2+). Residue histidine 63 is part of the active site. Position 64 (aspartate 64) interacts with Ca(2+). Aspartate 105 is a catalytic residue.

Monomer. Requires Ca(2+) as cofactor. In terms of tissue distribution, expressed by the venom gland.

It is found in the secreted. It carries out the reaction a 1,2-diacyl-sn-glycero-3-phosphocholine + H2O = a 1-acyl-sn-glycero-3-phosphocholine + a fatty acid + H(+). Functionally, snake venom phospholipase that inhibits ADP- and collagen-induced human platelet aggregation. This inhibition is completely inhibited by abolition of catalytic activity in case of collagen as inducer and partially inhibited in case of ADP as inducer. PLA2 catalyzes the calcium-dependent hydrolysis of the 2-acyl groups in 3-sn-phosphoglycerides. The polypeptide is Acidic phospholipase A2 1 (Macrovipera lebetinus (Levantine viper)).